The sequence spans 427 residues: 3-phosphoshikimate 1-carboxyvinyltransferase (427 aa).

3-phosphoshikimate is bound by residues Lys22, Ser23, and Arg27. Residue Lys22 coordinates phosphoenolpyruvate. Phosphoenolpyruvate-binding residues include Gly97 and Arg125. 3-phosphoshikimate-binding residues include Ser171, Ser172, Gln173, Ser199, Asp315, Asn338, and Lys342. A phosphoenolpyruvate-binding site is contributed by Gln173. Catalysis depends on Asp315, which acts as the Proton acceptor. Phosphoenolpyruvate is bound by residues Arg346, Arg388, and Lys413.

Belongs to the EPSP synthase family. In terms of assembly, monomer.

The protein resides in the cytoplasm. The enzyme catalyses 3-phosphoshikimate + phosphoenolpyruvate = 5-O-(1-carboxyvinyl)-3-phosphoshikimate + phosphate. It functions in the pathway metabolic intermediate biosynthesis; chorismate biosynthesis; chorismate from D-erythrose 4-phosphate and phosphoenolpyruvate: step 6/7. Its function is as follows. Catalyzes the transfer of the enolpyruvyl moiety of phosphoenolpyruvate (PEP) to the 5-hydroxyl of shikimate-3-phosphate (S3P) to produce enolpyruvyl shikimate-3-phosphate and inorganic phosphate. The protein is 3-phosphoshikimate 1-carboxyvinyltransferase of Aliivibrio salmonicida (strain LFI1238) (Vibrio salmonicida (strain LFI1238)).